A 352-amino-acid chain; its full sequence is Photosystem II D2 protein (352 aa).

At Thr2 the chain carries N-acetylthreonine. Position 2 is a phosphothreonine (Thr2). A helical transmembrane segment spans residues 40–60 (CAYFALGGWLTGTTFVTSWYT). His117 is a chlorophyll a binding site. A helical membrane pass occupies residues 124–140 (GFMLRQFEIARAVKIRP). Pheophytin a contacts are provided by Gln129 and Asn142. The helical transmembrane segment at 152-165 (VFVSVFLIYPLGQA) threads the bilayer. Position 197 (His197) interacts with chlorophyll a. A helical membrane pass occupies residues 207 to 227 (AALLCAIHGATVENTLFEDGD). The a plastoquinone site is built by His214 and Phe261. His214 provides a ligand contact to Fe cation. His268 contributes to the Fe cation binding site. A helical membrane pass occupies residues 278–294 (GLWMSALGVVGLALNLR).

This sequence belongs to the reaction center PufL/M/PsbA/D family. PSII is composed of 1 copy each of membrane proteins PsbA, PsbB, PsbC, PsbD, PsbE, PsbF, PsbH, PsbI, PsbJ, PsbK, PsbL, PsbM, PsbT, PsbX, PsbY, PsbZ, Psb30/Ycf12, at least 3 peripheral proteins of the oxygen-evolving complex and a large number of cofactors. It forms dimeric complexes. The D1/D2 heterodimer binds P680, chlorophylls that are the primary electron donor of PSII, and subsequent electron acceptors. It shares a non-heme iron and each subunit binds pheophytin, quinone, additional chlorophylls, carotenoids and lipids. There is also a Cl(-1) ion associated with D1 and D2, which is required for oxygen evolution. The PSII complex binds additional chlorophylls, carotenoids and specific lipids. serves as cofactor.

It localises to the plastid. It is found in the chloroplast thylakoid membrane. It catalyses the reaction 2 a plastoquinone + 4 hnu + 2 H2O = 2 a plastoquinol + O2. Functionally, photosystem II (PSII) is a light-driven water:plastoquinone oxidoreductase that uses light energy to abstract electrons from H(2)O, generating O(2) and a proton gradient subsequently used for ATP formation. It consists of a core antenna complex that captures photons, and an electron transfer chain that converts photonic excitation into a charge separation. The D1/D2 (PsbA/PsbD) reaction center heterodimer binds P680, the primary electron donor of PSII as well as several subsequent electron acceptors. D2 is needed for assembly of a stable PSII complex. The protein is Photosystem II D2 protein of Tupiella akineta (Green alga).